The primary structure comprises 225 residues: Protein LiaH (225 aa).

2 coiled-coil regions span residues 58 to 151 and 161 to 182; these read KKYE…KEHM and ESAY…IRAN.

The protein belongs to the PspA/Vipp/IM30 family.

The protein is Protein LiaH (liaH) of Bacillus subtilis (strain 168).